We begin with the raw amino-acid sequence, 386 residues long: Patatin-2-Kuras 3 (386 aa).

An N-terminal signal peptide occupies residues 1–23; the sequence is MATTKSVLVLFFMILATTSSTCA. One can recognise a PNPLA domain in the interval 32–229; it reads LSIDGGGIKG…TVGDPALLSL (198 aa). Positions 36–41 match the GXGXXG motif; that stretch reads GGGIKG. The GXSXG signature appears at 75–79; the sequence is GTSTG. The active-site Nucleophile is Ser-77. N-linked (GlcNAc...) asparagine glycosylation is present at Asn-115. Asp-215 serves as the catalytic Proton acceptor. The DGA/G signature appears at 215–217; that stretch reads DGA. Residues 321–384 are a coiled coil; the sequence is ENALTGTTTE…DRKKLRANKA (64 aa).

This sequence belongs to the patatin family. Tuber.

The protein resides in the vacuole. Its function is as follows. Probable lipolytic acyl hydrolase (LAH), an activity which is thought to be involved in the response of tubers to pathogens. This Solanum tuberosum (Potato) protein is Patatin-2-Kuras 3 (pat2-k3).